The chain runs to 161 residues: CASP-like protein 1C2 (161 aa).

Residues 1 to 7 (MAKNTDR) lie on the Cytoplasmic side of the membrane. Residues 8–28 (ICFLVLRLLAFGATLSAAIVM) form a helical membrane-spanning segment. Topologically, residues 29–53 (ATSHERTTYLSLSIEAKYSHTPAFK) are extracellular. A helical membrane pass occupies residues 54-74 (YFVIANAIGSAYSLLLLFLPS). The Cytoplasmic segment spans residues 75–86 (HGSLWPLVIASD). The helical transmembrane segment at 87-107 (VVITMFLTSSISAALSIAYVG) threads the bilayer. Residues 108-131 (KKGNSYAGWLPICDQVPNYCNHVT) are Extracellular-facing. Residues 132-152 (GALAAGFIGVVLYMVLLQYSI) traverse the membrane as a helical segment. Residues 153 to 161 (YTKCCKSSS) are Cytoplasmic-facing.

It belongs to the Casparian strip membrane proteins (CASP) family. Homodimer and heterodimers.

It localises to the cell membrane. This chain is CASP-like protein 1C2, found in Vitis vinifera (Grape).